Reading from the N-terminus, the 185-residue chain is Anaphase-promoting complex subunit 10 (185 aa).

N-acetylthreonine is present on Thr-2. One can recognise a DOC domain in the interval Thr-2–Arg-185. An N6-acetyllysine modification is found at Lys-169.

It belongs to the APC10 family. In terms of assembly, the mammalian APC/C is composed at least of 14 distinct subunits ANAPC1, ANAPC2, CDC27/APC3, ANAPC4, ANAPC5, CDC16/APC6, ANAPC7, CDC23/APC8, ANAPC10, ANAPC11, CDC26/APC12, ANAPC13, ANAPC15 and ANAPC16 that assemble into a complex of at least 19 chains with a combined molecular mass of around 1.2 MDa; APC/C interacts with FZR1 and FBXO5. The C-terminus of APC10 binds to CDC27/APC3. Interacts with PIWIL1; interaction only takes place when PIWIL1 binds piRNA. Interacts with FBXO43; the interaction is direct.

It participates in protein modification; protein ubiquitination. In terms of biological role, component of the anaphase promoting complex/cyclosome (APC/C), a cell cycle-regulated E3 ubiquitin ligase that controls progression through mitosis and the G1 phase of the cell cycle. The APC/C complex acts by mediating ubiquitination and subsequent degradation of target proteins: it mainly mediates the formation of 'Lys-11'-linked polyubiquitin chains and, to a lower extent, the formation of 'Lys-48'- and 'Lys-63'-linked polyubiquitin chains. The APC/C complex catalyzes assembly of branched 'Lys-11'-/'Lys-48'-linked branched ubiquitin chains on target proteins. The protein is Anaphase-promoting complex subunit 10 (Anapc10) of Mus musculus (Mouse).